The sequence spans 429 residues: 3-phosphoshikimate 1-carboxyvinyltransferase (429 aa).

Residues Lys-20, Ser-21, and Arg-25 each contribute to the 3-phosphoshikimate site. Lys-20 contacts phosphoenolpyruvate. 2 residues coordinate phosphoenolpyruvate: Gly-89 and Arg-118. 3-phosphoshikimate is bound by residues Ser-164, Ser-165, Gln-166, Ser-192, Asp-311, and Lys-338. Gln-166 serves as a coordination point for phosphoenolpyruvate. Asp-311 acts as the Proton acceptor in catalysis. 2 residues coordinate phosphoenolpyruvate: Arg-342 and Arg-384.

The protein belongs to the EPSP synthase family. In terms of assembly, monomer.

It is found in the cytoplasm. The catalysed reaction is 3-phosphoshikimate + phosphoenolpyruvate = 5-O-(1-carboxyvinyl)-3-phosphoshikimate + phosphate. Its pathway is metabolic intermediate biosynthesis; chorismate biosynthesis. Its function is as follows. Catalyzes the transfer of the enolpyruvyl moiety of phosphoenolpyruvate (PEP) to the 5-hydroxyl of shikimate-3-phosphate (S3P) to produce enolpyruvyl shikimate-3-phosphate and inorganic phosphate. The sequence is that of 3-phosphoshikimate 1-carboxyvinyltransferase from Methanococcus maripaludis (strain DSM 14266 / JCM 13030 / NBRC 101832 / S2 / LL).